Consider the following 234-residue polypeptide: Phosphoribosylaminoimidazole-succinocarboxamide synthase (234 aa).

The protein belongs to the SAICAR synthetase family.

The enzyme catalyses 5-amino-1-(5-phospho-D-ribosyl)imidazole-4-carboxylate + L-aspartate + ATP = (2S)-2-[5-amino-1-(5-phospho-beta-D-ribosyl)imidazole-4-carboxamido]succinate + ADP + phosphate + 2 H(+). It functions in the pathway purine metabolism; IMP biosynthesis via de novo pathway; 5-amino-1-(5-phospho-D-ribosyl)imidazole-4-carboxamide from 5-amino-1-(5-phospho-D-ribosyl)imidazole-4-carboxylate: step 1/2. In Staphylococcus aureus (strain MRSA252), this protein is Phosphoribosylaminoimidazole-succinocarboxamide synthase.